The sequence spans 168 residues: Large ribosomal subunit protein uL10 (168 aa).

This sequence belongs to the universal ribosomal protein uL10 family. As to quaternary structure, part of the ribosomal stalk of the 50S ribosomal subunit. The N-terminus interacts with L11 and the large rRNA to form the base of the stalk. The C-terminus forms an elongated spine to which L12 dimers bind in a sequential fashion forming a multimeric L10(L12)X complex.

In terms of biological role, forms part of the ribosomal stalk, playing a central role in the interaction of the ribosome with GTP-bound translation factors. The chain is Large ribosomal subunit protein uL10 (rplJ) from Buchnera aphidicola subsp. Baizongia pistaciae (strain Bp).